Consider the following 192-residue polypeptide: NAD(P)H-quinone oxidoreductase subunit J, organellar chromatophore (192 aa).

Belongs to the complex I 30 kDa subunit family. NDH is composed of at least 16 different subunits, 5 of which are encoded in the nucleus.

It is found in the plastid. Its subcellular location is the organellar chromatophore thylakoid membrane. It catalyses the reaction a quinone + NADH + H(+) = a quinol + NAD(+). Functionally, NDH-1 shuttles electrons from NADH, via FMN and iron-sulfur (Fe-S) centers, to quinones in the respiratory chain. Couples the redox reaction to proton translocation (for every two electrons transferred, four hydrogen ions are translocated across the cytoplasmic membrane), and thus conserves the redox energy in a proton gradient. The polypeptide is NAD(P)H-quinone oxidoreductase subunit J, organellar chromatophore (Paulinella chromatophora).